A 120-amino-acid chain; its full sequence is uncharacterized protein (120 aa).

The VOC domain maps to 4–120; the sequence is QIGTVAVYVE…EDGNVFLLKE (117 aa).

This is an uncharacterized protein from Bacillus subtilis (strain 168).